The sequence spans 211 residues: Germin-like protein subfamily 3 member 3 (211 aa).

Positions 1–20 (MKMIIQIFFIISLISTISFA) are cleaved as a signal peptide. An intrachain disulfide couples C26 to C41. Positions 55–201 (TGLGTAGNTS…TTFLSDAEVK (147 aa)) constitute a Cupin type-1 domain. N-linked (GlcNAc...) asparagine glycosylation is present at N62. Residues H103, H105, and E110 each contribute to the Mn(2+) site. A Phosphoserine modification is found at S140. H149 serves as a coordination point for Mn(2+).

The protein belongs to the germin family. As to quaternary structure, oligomer (believed to be a pentamer but probably hexamer). Expressed in leaves and flowers.

The protein localises to the secreted. It localises to the extracellular space. Its subcellular location is the apoplast. May play a role in plant defense. Probably has no oxalate oxidase activity even if the active site is conserved. This chain is Germin-like protein subfamily 3 member 3 (GER3), found in Arabidopsis thaliana (Mouse-ear cress).